The primary structure comprises 558 residues: Arginine--tRNA ligase (558 aa).

The 'HIGH' region signature appears at 119–129 (ANPNGPLHVGH).

This sequence belongs to the class-I aminoacyl-tRNA synthetase family.

Its subcellular location is the cytoplasm. It carries out the reaction tRNA(Arg) + L-arginine + ATP = L-arginyl-tRNA(Arg) + AMP + diphosphate. The chain is Arginine--tRNA ligase from Methanoregula boonei (strain DSM 21154 / JCM 14090 / 6A8).